We begin with the raw amino-acid sequence, 278 residues long: Large ribosomal subunit protein uL2 (278 aa).

Composition is skewed to basic residues over residues 210-219 and 252-263; these read RKRWLGKRPQ and KKSRGIKTRNSK. Residues 210–278 form a disordered region; that stretch reads RKRWLGKRPQ…LIIRHRKGNK (69 aa).

This sequence belongs to the universal ribosomal protein uL2 family. As to quaternary structure, part of the 50S ribosomal subunit. Forms a bridge to the 30S subunit in the 70S ribosome.

Its function is as follows. One of the primary rRNA binding proteins. Required for association of the 30S and 50S subunits to form the 70S ribosome, for tRNA binding and peptide bond formation. It has been suggested to have peptidyltransferase activity; this is somewhat controversial. Makes several contacts with the 16S rRNA in the 70S ribosome. This is Large ribosomal subunit protein uL2 from Lactobacillus gasseri (strain ATCC 33323 / DSM 20243 / BCRC 14619 / CIP 102991 / JCM 1131 / KCTC 3163 / NCIMB 11718 / NCTC 13722 / AM63).